The primary structure comprises 257 residues: DNA repair protein RecO (257 aa).

It belongs to the RecO family.

Its function is as follows. Involved in DNA repair and RecF pathway recombination. In Streptococcus thermophilus (strain ATCC BAA-491 / LMD-9), this protein is DNA repair protein RecO.